Reading from the N-terminus, the 462-residue chain is Siroheme synthase (462 aa).

The precorrin-2 dehydrogenase /sirohydrochlorin ferrochelatase stretch occupies residues 1 to 203; sequence MQYFPIFVDT…GNNSKAEQMM (203 aa). NAD(+) is bound by residues 22 to 23 and 43 to 44; these read EV and PW. Ser-128 is subject to Phosphoserine. The tract at residues 217 to 462 is uroporphyrinogen-III C-methyltransferase; it reads GEVYLVGAGP…EKLNWFGADA (246 aa). Pro-226 is a binding site for S-adenosyl-L-methionine. The Proton acceptor role is filled by Asp-249. The Proton donor role is filled by Lys-271. S-adenosyl-L-methionine is bound by residues 302–304, Ile-307, 332–333, Met-384, and Ala-413; these read GGD and TA.

It in the N-terminal section; belongs to the precorrin-2 dehydrogenase / sirohydrochlorin ferrochelatase family. This sequence in the C-terminal section; belongs to the precorrin methyltransferase family.

The catalysed reaction is uroporphyrinogen III + 2 S-adenosyl-L-methionine = precorrin-2 + 2 S-adenosyl-L-homocysteine + H(+). It catalyses the reaction precorrin-2 + NAD(+) = sirohydrochlorin + NADH + 2 H(+). The enzyme catalyses siroheme + 2 H(+) = sirohydrochlorin + Fe(2+). The protein operates within cofactor biosynthesis; adenosylcobalamin biosynthesis; precorrin-2 from uroporphyrinogen III: step 1/1. It participates in cofactor biosynthesis; adenosylcobalamin biosynthesis; sirohydrochlorin from precorrin-2: step 1/1. Its pathway is porphyrin-containing compound metabolism; siroheme biosynthesis; precorrin-2 from uroporphyrinogen III: step 1/1. It functions in the pathway porphyrin-containing compound metabolism; siroheme biosynthesis; siroheme from sirohydrochlorin: step 1/1. The protein operates within porphyrin-containing compound metabolism; siroheme biosynthesis; sirohydrochlorin from precorrin-2: step 1/1. Functionally, multifunctional enzyme that catalyzes the SAM-dependent methylations of uroporphyrinogen III at position C-2 and C-7 to form precorrin-2 via precorrin-1. Then it catalyzes the NAD-dependent ring dehydrogenation of precorrin-2 to yield sirohydrochlorin. Finally, it catalyzes the ferrochelation of sirohydrochlorin to yield siroheme. This Pseudoalteromonas atlantica (strain T6c / ATCC BAA-1087) protein is Siroheme synthase.